A 237-amino-acid chain; its full sequence is Sugar fermentation stimulation protein homolog (237 aa).

Belongs to the SfsA family.

The protein is Sugar fermentation stimulation protein homolog of Pseudomonas syringae pv. syringae (strain B728a).